The following is a 604-amino-acid chain: Aspartate--tRNA(Asp/Asn) ligase (604 aa).

Residue glutamate 174 coordinates L-aspartate. Residues 198–201 (QLYK) are aspartate. Arginine 220 contacts L-aspartate. ATP contacts are provided by residues 220-222 (RDE) and glutamine 229. Histidine 460 lines the L-aspartate pocket. Glutamate 494 contacts ATP. Arginine 501 contacts L-aspartate. Position 546–549 (546–549 (GLDR)) interacts with ATP.

The protein belongs to the class-II aminoacyl-tRNA synthetase family. Type 1 subfamily. As to quaternary structure, homodimer.

The protein localises to the cytoplasm. The enzyme catalyses tRNA(Asx) + L-aspartate + ATP = L-aspartyl-tRNA(Asx) + AMP + diphosphate. In terms of biological role, aspartyl-tRNA synthetase with relaxed tRNA specificity since it is able to aspartylate not only its cognate tRNA(Asp) but also tRNA(Asn). Reaction proceeds in two steps: L-aspartate is first activated by ATP to form Asp-AMP and then transferred to the acceptor end of tRNA(Asp/Asn). The sequence is that of Aspartate--tRNA(Asp/Asn) ligase from Paracidovorax citrulli (strain AAC00-1) (Acidovorax citrulli).